The sequence spans 60 residues: Large ribosomal subunit protein bL32 (60 aa).

It belongs to the bacterial ribosomal protein bL32 family.

This is Large ribosomal subunit protein bL32 from Thermosipho africanus (strain TCF52B).